Reading from the N-terminus, the 549-residue chain is Cytoplasmic trehalase (549 aa).

Substrate is bound by residues Arg168, 175 to 176, Asn212, 221 to 223, 292 to 294, and Gly324; these read WD, RSQ, and RDE. Active-site proton donor/acceptor residues include Asp326 and Glu509. Substrate is bound at residue Glu525.

This sequence belongs to the glycosyl hydrolase 37 family. In terms of assembly, monomer.

Its subcellular location is the cytoplasm. It catalyses the reaction alpha,alpha-trehalose + H2O = alpha-D-glucose + beta-D-glucose. It functions in the pathway glycan degradation; trehalose degradation; D-glucose from alpha,alpha-trehalose: step 1/1. Hydrolyzes trehalose to glucose. Could be involved, in cells returning to low osmolarity conditions, in the utilization of the accumulated cytoplasmic trehalose, which was synthesized in response to high osmolarity. The protein is Cytoplasmic trehalase of Escherichia fergusonii (strain ATCC 35469 / DSM 13698 / CCUG 18766 / IAM 14443 / JCM 21226 / LMG 7866 / NBRC 102419 / NCTC 12128 / CDC 0568-73).